Reading from the N-terminus, the 207-residue chain is Ras-related protein Rab-8B (207 aa).

Residues Ser17, Gly18, Val19, Gly20, Lys21, Thr22, Cys23, Thr35, Ser39, and Thr40 each contribute to the GTP site. Thr22 provides a ligand contact to Mg(2+). 2 short sequence motifs (switch) span residues 31-45 (DAFN…GIDF) and 63-80 (DTAG…YYRG). Mg(2+)-binding residues include Thr40 and Asp63. A GTP-binding site is contributed by Gly66. Phosphothreonine; by LRRK2 is present on Thr72. GTP-binding residues include Asn121, Lys122, Asp124, Ala152, and Lys153. Position 180 is a phosphoserine (Ser180). Position 204 is a cysteine methyl ester (Cys204). Residue Cys204 is the site of S-geranylgeranyl cysteine attachment. Positions 205–207 (SLL) are cleaved as a propeptide — removed in mature form.

It belongs to the small GTPase superfamily. Rab family. Associated with actin, delta-catenin and alpha and beta tubulins. Interacts with OTOF. Interacts with PEX5R. Interacts with RAB3IP. Interacts with VIM. Interacts with CDH1. Interacts with MICALL2. Interacts with GDI1, GDI2, CHML and CHM; phosphorylation at Thr-72 disrupts these interactions. Interacts with MICAL1. Mg(2+) is required as a cofactor. In terms of processing, phosphorylation of Thr-72 in the switch II region by LRRK2 prevents the association of RAB regulatory proteins, including CHM, CHML and RAB GDP dissociation inhibitors GDI1 and GDI2.

It localises to the cell membrane. It is found in the cytoplasmic vesicle. The protein localises to the phagosome. The protein resides in the phagosome membrane. Its subcellular location is the endosome membrane. The catalysed reaction is GTP + H2O = GDP + phosphate + H(+). Regulated by guanine nucleotide exchange factors (GEFs) including RAB3IP/RABIN8 which promotes the exchange of bound GDP for free GTP. Regulated by GTPase activating proteins (GAPs) which increase the GTP hydrolysis activity. Inhibited by GDP dissociation inhibitors (GDIs). Its function is as follows. The small GTPases Rab are key regulators of intracellular membrane trafficking, from the formation of transport vesicles to their fusion with membranes. Rabs cycle between an inactive GDP-bound form and an active GTP-bound form that is able to recruit to membranes different sets of downstream effectors directly responsible for vesicle formation, movement, tethering and fusion. RAB8B may be involved in polarized vesicular trafficking and neurotransmitter release. May participate in cell junction dynamics in Sertoli cells. May also participate in the export of a subset of neosynthesized proteins through a Rab8-Rab10-Rab11-dependent endososomal export route. This chain is Ras-related protein Rab-8B, found in Homo sapiens (Human).